Here is a 100-residue protein sequence, read N- to C-terminus: NADH-quinone oxidoreductase subunit K (100 aa).

The next 3 helical transmembrane spans lie at 2-22 (IPLQ…LTGV), 28-48 (LLFM…AFVV), and 60-80 (VMFI…LALL).

Belongs to the complex I subunit 4L family. In terms of assembly, NDH-1 is composed of 13 different subunits. Subunits NuoA, H, J, K, L, M, N constitute the membrane sector of the complex.

It is found in the cell inner membrane. It catalyses the reaction a quinone + NADH + 5 H(+)(in) = a quinol + NAD(+) + 4 H(+)(out). NDH-1 shuttles electrons from NADH, via FMN and iron-sulfur (Fe-S) centers, to quinones in the respiratory chain. The immediate electron acceptor for the enzyme in this species is believed to be ubiquinone. Couples the redox reaction to proton translocation (for every two electrons transferred, four hydrogen ions are translocated across the cytoplasmic membrane), and thus conserves the redox energy in a proton gradient. The sequence is that of NADH-quinone oxidoreductase subunit K from Erwinia tasmaniensis (strain DSM 17950 / CFBP 7177 / CIP 109463 / NCPPB 4357 / Et1/99).